We begin with the raw amino-acid sequence, 176 residues long: NAD(P)H-quinone oxidoreductase subunit 6, chloroplastic (176 aa).

5 consecutive transmembrane segments (helical) span residues 10 to 30, 32 to 52, 61 to 81, 92 to 112, and 152 to 172; these read FLLV…VLLP, PIFS…LYIL, AQLL…VMFM, LWTV…FSLL, and FFLP…GAIS.

It belongs to the complex I subunit 6 family. As to quaternary structure, NDH is composed of at least 16 different subunits, 5 of which are encoded in the nucleus.

It is found in the plastid. It localises to the chloroplast thylakoid membrane. The enzyme catalyses a plastoquinone + NADH + (n+1) H(+)(in) = a plastoquinol + NAD(+) + n H(+)(out). It catalyses the reaction a plastoquinone + NADPH + (n+1) H(+)(in) = a plastoquinol + NADP(+) + n H(+)(out). Its function is as follows. NDH shuttles electrons from NAD(P)H:plastoquinone, via FMN and iron-sulfur (Fe-S) centers, to quinones in the photosynthetic chain and possibly in a chloroplast respiratory chain. The immediate electron acceptor for the enzyme in this species is believed to be plastoquinone. Couples the redox reaction to proton translocation, and thus conserves the redox energy in a proton gradient. This is NAD(P)H-quinone oxidoreductase subunit 6, chloroplastic (ndhG) from Lepidium virginicum (Virginia pepperweed).